A 297-amino-acid polypeptide reads, in one-letter code: Small ribosomal subunit protein uS2 (297 aa).

The span at 263 to 289 (AAPTSWEADGGDWAASSAAPAGESWAE) shows a compositional bias: low complexity. The interval 263-297 (AAPTSWEADGGDWAASSAAPAGESWAETQPAEAKW) is disordered.

This sequence belongs to the universal ribosomal protein uS2 family. Component of the small ribosomal subunit. Mature ribosomes consist of a small (40S) and a large (60S) subunit. The 40S subunit contains about 33 different proteins and 1 molecule of RNA (18S). The 60S subunit contains about 49 different proteins and 3 molecules of RNA (25S, 5.8S and 5S). Interacts with rps21.

Its subcellular location is the cytoplasm. In terms of biological role, required for the assembly and/or stability of the 40S ribosomal subunit. Required for the processing of the 20S rRNA-precursor to mature 18S rRNA in a late step of the maturation of 40S ribosomal subunits. This is Small ribosomal subunit protein uS2 (rps0) from Neosartorya fischeri (strain ATCC 1020 / DSM 3700 / CBS 544.65 / FGSC A1164 / JCM 1740 / NRRL 181 / WB 181) (Aspergillus fischerianus).